The chain runs to 218 residues: Flagellar calcium-binding protein TB-24 (218 aa).

A disordered region spans residues methionine 1–threonine 27. EF-hand domains follow at residues glutamate 48–leucine 83, aspartate 84–phenylalanine 119, tyrosine 130–tryptophan 165, and valine 167–glutamine 202. Positions 61, 63, 65, 67, and 72 each coordinate Ca(2+). Residues aspartate 143, aspartate 145, serine 147, glutamate 154, aspartate 180, asparagine 182, serine 184, and glutamate 191 each coordinate Ca(2+).

This sequence belongs to the calflagin family.

Its subcellular location is the cell projection. The protein localises to the cilium. It is found in the flagellum. In terms of biological role, may contribute to the rapid motility of the trypanosomes, playing a role either in flagellar structure or in calcium metabolism. Could alternate between a GDP-bound inactive form to a calcium/GTP-bound active form. In Trypanosoma brucei brucei, this protein is Flagellar calcium-binding protein TB-24.